An 800-amino-acid chain; its full sequence is DNA topoisomerase 4 subunit A (800 aa).

A Topo IIA-type catalytic domain is found at 31–495; sequence LPDVRDGLKP…EIEEIKIDKE (465 aa). The O-(5'-phospho-DNA)-tyrosine intermediate role is filled by Tyr119.

It belongs to the type II topoisomerase GyrA/ParC subunit family. ParC type 2 subfamily. In terms of assembly, heterotetramer composed of ParC and ParE.

The protein resides in the cell membrane. It catalyses the reaction ATP-dependent breakage, passage and rejoining of double-stranded DNA.. In terms of biological role, topoisomerase IV is essential for chromosome segregation. It relaxes supercoiled DNA. Performs the decatenation events required during the replication of a circular DNA molecule. This Staphylococcus aureus (strain Mu50 / ATCC 700699) protein is DNA topoisomerase 4 subunit A.